A 456-amino-acid chain; its full sequence is Argininosuccinate lyase (456 aa).

The protein belongs to the lyase 1 family. Argininosuccinate lyase subfamily.

It localises to the cytoplasm. It carries out the reaction 2-(N(omega)-L-arginino)succinate = fumarate + L-arginine. Its pathway is amino-acid biosynthesis; L-arginine biosynthesis; L-arginine from L-ornithine and carbamoyl phosphate: step 3/3. The sequence is that of Argininosuccinate lyase from Carboxydothermus hydrogenoformans (strain ATCC BAA-161 / DSM 6008 / Z-2901).